We begin with the raw amino-acid sequence, 522 residues long: Target of rapamycin complex 2 subunit MAPKAP1 (522 aa).

Ala2 bears the N-acetylalanine mark. The segment at 2 to 184 (AFLDNPTIIL…KKIDVYLPLH (183 aa)) is interaction with MAP3K2. The interaction with NBN stretch occupies residues 2–267 (AFLDNPTIIL…GFSTLALVEK (266 aa)). Position 86 is a phosphothreonine (Thr86). 4 positions are modified to phosphoserine: Ser128, Ser186, Ser315, and Ser356. The region spanning 139 to 267 (QSILSVRLEQ…GFSTLALVEK (129 aa)) is the CRIM domain. The interval 279–353 (LFVRINAAHG…QSAWEFCLVR (75 aa)) is SIN1-type RBD. Residues 382–487 (HYKSFKVSMI…IVLKVNYILE (106 aa)) enclose the SIN1-type PH domain. Arg393 is an a 1,2-diacyl-sn-glycero-3-phospho-(1D-myo-inositol-3,4,5-trisphosphate) binding site. Thr398 is subject to Phosphothreonine. The a 1,2-diacyl-sn-glycero-3-phospho-(1D-myo-inositol-3,4,5-trisphosphate) site is built by Lys428 and Lys464. The tract at residues 468–522 (FESDAATVNEIVLKVNYILESRASTARADYFAQKQRKLNRRTSFSFQKEKKSGQQ) is interaction with ATF2. Residue Ser510 is modified to Phosphoserine.

It belongs to the SIN1 family. In terms of assembly, component of the mechanistic target of rapamycin complex 2 (mTORC2), consisting in two heterotretramers composed of MTOR, MLST8, RICTOR and MAPKAP1/SIN1. The mTORC2 core complex associates with PRR5/PROTOR1 and/or PRR5L/PROTOR2. Contrary to mTORC1, mTORC2 does not bind to and is not sensitive to FKBP12-rapamycin. Interacts with MAP3K2. Interacts with ATF2. Interacts with MAPK8. Interacts with GTP-bound HRAS and KRAS; inhibiting their activity. Interacts with IFNAR2. Interacts with CCDC28B. As to quaternary structure, interacts with NBN. Post-translationally, phosphorylation at Ser-128 by PKC promotes relocalization to the perinuclear region, where the mTORC2 complex specifically mediates phosphorylation of SGK1. Phosphorylated at Thr-86 by AKT1 or RPS6KB1 in the presence of growth factors; the effect of this phosphorylation is however unclear. According to two studies, phosphorylation at Thr-86 by AKT1 is part of a positive feedback loop that increases mTORC2 activation. According to another study, phosphorylation at Thr-86 and Thr-398 by RPS6KB1 promotes dissociation from the mTORC2 complex, leading to inhibit mTORC2 signaling. As to expression, ubiquitously expressed, with highest levels in heart and skeletal muscle.

Its subcellular location is the cell membrane. It is found in the endoplasmic reticulum membrane. The protein localises to the early endosome membrane. It localises to the late endosome membrane. The protein resides in the lysosome membrane. Its subcellular location is the golgi apparatus membrane. It is found in the mitochondrion outer membrane. The protein localises to the cytoplasm. It localises to the perinuclear region. The protein resides in the nucleus. Its subcellular location is the cytosol. With respect to regulation, phosphatidylinositol 3,4,5-trisphosphate (PI(3,4,5)P3) promotes MTOR activation by relieving MAPKAP1/SIN1-mediated inhibition of MTOR that takes place in absence of PI(3,4,5)P3. Functionally, component of the mechanistic target of rapamycin complex 2 (mTORC2), which transduces signals from growth factors to pathways involved in proliferation, cytoskeletal organization, lipogenesis and anabolic output. In response to growth factors, mTORC2 phosphorylates and activates AGC protein kinase family members, including AKT (AKT1, AKT2 and AKT3), PKC (PRKCA, PRKCB and PRKCE) and SGK1. In contrast to mTORC1, mTORC2 is nutrient-insensitive. Within the mTORC2 complex, MAPKAP1/SIN1 acts as a substrate adapter which recognizes and binds AGC protein kinase family members for phosphorylation by MTOR. mTORC2 plays a critical role in AKT1 activation by mediating phosphorylation of different sites depending on the context, such as 'Thr-450', 'Ser-473', 'Ser-477' or 'Thr-479', facilitating the phosphorylation of the activation loop of AKT1 on 'Thr-308' by PDPK1/PDK1 which is a prerequisite for full activation. mTORC2 catalyzes the phosphorylation of SGK1 at 'Ser-422' and of PRKCA on 'Ser-657'. The mTORC2 complex also phosphorylates various proteins involved in insulin signaling, such as FBXW8 and IGF2BP1. mTORC2 acts upstream of Rho GTPases to regulate the actin cytoskeleton, probably by activating one or more Rho-type guanine nucleotide exchange factors. mTORC2 promotes the serum-induced formation of stress-fibers or F-actin. MAPKAP1 inhibits MAP3K2 by preventing its dimerization and autophosphorylation. Inhibits HRAS and KRAS independently of mTORC2 complex. Enhances osmotic stress-induced phosphorylation of ATF2 and ATF2-mediated transcription. Involved in ciliogenesis, regulates cilia length through its interaction with CCDC28B independently of mTORC2 complex. In contrast to isoform 1, isoform 2 and isoform 6, isoform 4 is not a component of the a mTORC2 complex. The sequence is that of Target of rapamycin complex 2 subunit MAPKAP1 from Homo sapiens (Human).